Consider the following 395-residue polypeptide: NKAP-like protein (395 aa).

2 disordered regions span residues 1 to 77 (MSPV…RPLP) and 91 to 247 (CGGY…ISCK). A phosphoserine mark is found at serine 23 and serine 25. Residues 25–35 (SPPSALQTSRS) show a composition bias toward polar residues. A compositionally biased stretch (basic and acidic residues) spans 109–130 (DQEKEKEESYRQRRLKERERIG). A Phosphoserine modification is found at serine 149. The segment covering 150–161 (DEHTPAEDEVKN) has biased composition (basic and acidic residues). 2 stretches are compositionally biased toward basic residues: residues 177–197 (KTSH…KHKK) and 214–238 (KKVK…KRTK).

This sequence belongs to the NKAP family. Interacts with RBPJ, CIR1 and HDAC3. As to expression, specific to testis (at protein level). Detected in differenting spermatogonia and early spermatocytes (at protein level).

Its subcellular location is the nucleus. Transcriptional repressor of Notch-mediated signaling. Required for spermatogenesis. The chain is NKAP-like protein from Mus musculus (Mouse).